The primary structure comprises 175 residues: NADH-ubiquinone oxidoreductase chain 6 (175 aa).

A run of 5 helical transmembrane segments spans residues 1-21, 25-45, 47-67, 88-108, and 149-169; these read MMIY…VGFS, SPIY…GIVM, FGGS…MLVV, TVLS…LYMF, and YGVW…LVVL.

It belongs to the complex I subunit 6 family. In terms of assembly, core subunit of respiratory chain NADH dehydrogenase (Complex I) which is composed of 45 different subunits.

Its subcellular location is the mitochondrion inner membrane. It catalyses the reaction a ubiquinone + NADH + 5 H(+)(in) = a ubiquinol + NAD(+) + 4 H(+)(out). Core subunit of the mitochondrial membrane respiratory chain NADH dehydrogenase (Complex I) which catalyzes electron transfer from NADH through the respiratory chain, using ubiquinone as an electron acceptor. Essential for the catalytic activity and assembly of complex I. This chain is NADH-ubiquinone oxidoreductase chain 6 (MT-ND6), found in Rhinoceros unicornis (Greater Indian rhinoceros).